The primary structure comprises 155 residues: Large ribosomal subunit protein uL22 (155 aa).

Belongs to the universal ribosomal protein uL22 family. As to quaternary structure, part of the 50S ribosomal subunit.

Its function is as follows. This protein binds specifically to 23S rRNA. It makes multiple contacts with different domains of the 23S rRNA in the assembled 50S subunit and ribosome. In terms of biological role, the globular domain of the protein is located near the polypeptide exit tunnel on the outside of the subunit, while an extended beta-hairpin is found that lines the wall of the exit tunnel in the center of the 70S ribosome. The polypeptide is Large ribosomal subunit protein uL22 (Archaeoglobus fulgidus (strain ATCC 49558 / DSM 4304 / JCM 9628 / NBRC 100126 / VC-16)).